The primary structure comprises 318 residues: Formimidoylglutamase (318 aa).

Residues H130, D155, H157, D159, D246, and D248 each coordinate Mn(2+).

This sequence belongs to the arginase family. Requires Mn(2+) as cofactor.

The catalysed reaction is N-formimidoyl-L-glutamate + H2O = formamide + L-glutamate. Its pathway is amino-acid degradation; L-histidine degradation into L-glutamate; L-glutamate from N-formimidoyl-L-glutamate (hydrolase route): step 1/1. Functionally, catalyzes the conversion of N-formimidoyl-L-glutamate to L-glutamate and formamide. This Photorhabdus laumondii subsp. laumondii (strain DSM 15139 / CIP 105565 / TT01) (Photorhabdus luminescens subsp. laumondii) protein is Formimidoylglutamase.